Here is a 114-residue protein sequence, read N- to C-terminus: Evasin-1 (114 aa).

Positions 1-20 (MTFKACIAIITALCAMQVIC) are cleaved as a signal peptide. 4 cysteine pairs are disulfide-bonded: cysteine 32–cysteine 53, cysteine 49–cysteine 90, cysteine 66–cysteine 95, and cysteine 85–cysteine 104. Asparagine 39, asparagine 54, and asparagine 62 each carry an N-linked (GlcNAc...) asparagine glycan.

This sequence belongs to the evasin C8 family. As to quaternary structure, monomer.

It is found in the secreted. In terms of biological role, salivary chemokine-binding protein which shows chemokine neutralizing activity and binds to host chemokines CCL3, CCL4 and CCL18. Binds to CCL3 with 1:1 stoichiometry. The chain is Evasin-1 from Rhipicephalus sanguineus (Brown dog tick).